The sequence spans 179 residues: Crossover junction endodeoxyribonuclease RuvC (179 aa).

Active-site residues include aspartate 14, glutamate 74, and aspartate 147. The Mg(2+) site is built by aspartate 14, glutamate 74, and aspartate 147.

Belongs to the RuvC family. As to quaternary structure, homodimer which binds Holliday junction (HJ) DNA. The HJ becomes 2-fold symmetrical on binding to RuvC with unstacked arms; it has a different conformation from HJ DNA in complex with RuvA. In the full resolvosome a probable DNA-RuvA(4)-RuvB(12)-RuvC(2) complex forms which resolves the HJ. It depends on Mg(2+) as a cofactor.

It is found in the cytoplasm. The catalysed reaction is Endonucleolytic cleavage at a junction such as a reciprocal single-stranded crossover between two homologous DNA duplexes (Holliday junction).. Its function is as follows. The RuvA-RuvB-RuvC complex processes Holliday junction (HJ) DNA during genetic recombination and DNA repair. Endonuclease that resolves HJ intermediates. Cleaves cruciform DNA by making single-stranded nicks across the HJ at symmetrical positions within the homologous arms, yielding a 5'-phosphate and a 3'-hydroxyl group; requires a central core of homology in the junction. The consensus cleavage sequence is 5'-(A/T)TT(C/G)-3'. Cleavage occurs on the 3'-side of the TT dinucleotide at the point of strand exchange. HJ branch migration catalyzed by RuvA-RuvB allows RuvC to scan DNA until it finds its consensus sequence, where it cleaves and resolves the cruciform DNA. This Rubrobacter xylanophilus (strain DSM 9941 / JCM 11954 / NBRC 16129 / PRD-1) protein is Crossover junction endodeoxyribonuclease RuvC.